The sequence spans 582 residues: BTB/POZ domain and ankyrin repeat-containing protein NPR1 (582 aa).

Positions methionine 1–phenylalanine 12 are enriched in polar residues. The segment at methionine 1 to alanine 27 is disordered. The BTB domain occupies alanine 55 to valine 140. The segment at alanine 147 to histidine 161 adopts a C2HC NPR-type zinc-finger fold. Zn(2+) is bound by residues cysteine 150, cysteine 155, histidine 157, and cysteine 160. ANK repeat units follow at residues arginine 229 to leucine 258, lysine 269 to aspartate 299, phenylalanine 301 to histidine 328, and arginine 332 to aspartate 361. The salicylic acid-binding core (SBC) stretch occupies residues proline 391–threonine 526. Arginine 436 is a binding site for salicylate. Disordered stretches follow at residues glutamate 525–histidine 544 and glutamine 551–arginine 582. The span at alanine 553–arginine 563 shows a compositional bias: basic and acidic residues. Over residues serine 564–serine 574 the composition is skewed to low complexity.

It belongs to the plant 'ANKYRIN-BTB/POZ' family. 'NPR1-like' subfamily. Oligomer in an uninduced state; disulfide-linked. Forms activated monomer upon changes in cellular redox potential. Interacts with TGA2.2. Interacts with NRR.

It is found in the cytoplasm. The protein localises to the nucleus. Its subcellular location is the nuclear body. The protein operates within protein modification; protein ubiquitination. Its function is as follows. Salicylic acid (SA)-binding substrate-specific adapter of an E3 ubiquitin-protein ligase complex (CUL3-RBX1-BTB) which mediates the ubiquitination and subsequent proteasomal degradation of target proteins. Transcription cofactor that represses gene expression in the absence of salicylic acid (SA), when attached to negative cis-elements (W-box) with WRKY transcription factors, but stimulates gene expression upon activation by SA, when sumoylated and attached to positive cis-elements (as-1) with TGA transcription factors, thus confering immunity through a series of gene regulations ending in a significant increase in antimicrobial and defense genes expression. Key positive factor of disease resistance. Involved in defense response against the bacterial blight disease caused by Xanthomonas oryzae pv. oryzae (Xoo). Plants over-expressing NPR1/NH1 acquire high levels of resistance to Xoo, express constitutively defense genes and develop lesion-mimic spots on leaves at pre-flowering stage. Involved in basal resistance to the blast pathogen Magnaporthe oryzae. Plants over-expressing NPR1/NH1 have increased resistance to M.oryzae infection. Plays an essential role in benzothiadiazole (BTH)-induced resistance to the blast fungus disease caused by Magnaporthe oryzae. Functions as a transcriptional coactivator of TGA2.1 and LG2 in vitro. Involved in defense response against herbivore. Plants silencing NPR1/NH1 have increased herbivore-induced trypsin proteinase inhibitors and volatiles, which reduces the performance of the striped stem borer (SSB) Chilo suppressalis. The polypeptide is BTB/POZ domain and ankyrin repeat-containing protein NPR1 (Oryza sativa subsp. indica (Rice)).